Consider the following 86-residue polypeptide: Anti-adapter protein IraP (86 aa).

A coiled-coil region spans residues M1–M36.

The protein belongs to the IraP family. Interacts with RssB.

It is found in the cytoplasm. Inhibits RpoS proteolysis by regulating RssB activity, thereby increasing the stability of the sigma stress factor RpoS especially during phosphate starvation, but also in stationary phase and during nitrogen starvation. Its effect on RpoS stability is due to its interaction with RssB, which probably blocks the interaction of RssB with RpoS, and the consequent delivery of the RssB-RpoS complex to the ClpXP protein degradation pathway. In Citrobacter koseri (strain ATCC BAA-895 / CDC 4225-83 / SGSC4696), this protein is Anti-adapter protein IraP.